A 144-amino-acid chain; its full sequence is 3-hydroxyacyl-[acyl-carrier-protein] dehydratase FabZ (144 aa).

Residue His-51 is part of the active site.

This sequence belongs to the thioester dehydratase family. FabZ subfamily.

The protein localises to the cytoplasm. It carries out the reaction a (3R)-hydroxyacyl-[ACP] = a (2E)-enoyl-[ACP] + H2O. In terms of biological role, involved in unsaturated fatty acids biosynthesis. Catalyzes the dehydration of short chain beta-hydroxyacyl-ACPs and long chain saturated and unsaturated beta-hydroxyacyl-ACPs. In Clostridium botulinum (strain Langeland / NCTC 10281 / Type F), this protein is 3-hydroxyacyl-[acyl-carrier-protein] dehydratase FabZ.